The sequence spans 147 residues: MKLHELKPAEGAVRAKRRLGRGTATGQGKTAGRGQKGQWSRSGGGVRVGFEGGQMPLARRLPKRGFNNIFKKVYTEVNVEVLNRFENGTEITAELLKSTKTISKIGKDGIKILGEGNLEKALTVKAAKFTASAQEKIEKAGGKAELV.

The segment at 1 to 47 (MKLHELKPAEGAVRAKRRLGRGTATGQGKTAGRGQKGQWSRSGGGVR) is disordered. The segment covering 23–35 (TATGQGKTAGRGQ) has biased composition (gly residues).

It belongs to the universal ribosomal protein uL15 family. Part of the 50S ribosomal subunit.

Functionally, binds to the 23S rRNA. This is Large ribosomal subunit protein uL15 from Clostridioides difficile (strain 630) (Peptoclostridium difficile).